The chain runs to 135 residues: Hemoglobin subunit alpha (135 aa).

Positions 1-135 (AAVVALWGKI…VALALAERYK (135 aa)) constitute a Globin domain. Histidine 52 is an O2 binding site. A heme b-binding site is contributed by histidine 81.

This sequence belongs to the globin family. In terms of assembly, hb1 is a heterotetramer of two alpha chains and two beta-1 chains. Hb2 is a heterotetramer of two alpha chains and two beta-2 chains. The N-terminus is blocked. In terms of tissue distribution, red blood cells.

In terms of biological role, involved in oxygen transport from gills to the various peripheral tissues. The protein is Hemoglobin subunit alpha of Dissostichus eleginoides (Patagonian toothfish).